A 422-amino-acid chain; its full sequence is MAADKPHMNLAVIGHIDHGKSTLVGRLMYEAGAVPAHIIEKYKEEAKQKGKESFAFAWVMDSLKEERERGITIDIAHKRFDTPKYYFTVVDCPGHRDFVKNMITGASQADAAILVVAAPDGVMAQTKEHIFLSRTLGINQLIIAINKMDAVEYSEAKYKEVVEQVSGLLKMIGFKPANIPFIPTSAFMGDNITKLSEKTPWYKGPVIMQALDELKEPEKPSTLPLRIPVEDAYTISGIGTVPVGRVETGVMKKGDKVIFMPGGAGGEVKSIEMHHEEIPQAYPGDNIGWNVRGIGKNDVRRGDVCGHTDNPPKVADEFVGQIVVLQHPSAITAGYTPVFHAHTSQIACQLISLDKKLDPKTGQVKEEHPTFIKAGDAAIVTIKPTKPMVIEPVKEIPQLGRFAIRDMGMTIAAGMCMSVKQK.

Residues 5–221 (KPHMNLAVIG…DELKEPEKPS (217 aa)) enclose the tr-type G domain. Residues 14-21 (GHIDHGKS) form a G1 region. Residue 14–21 (GHIDHGKS) participates in GTP binding. Position 21 (Ser-21) interacts with Mg(2+). Residues 70–74 (GITID) are G2. The tract at residues 91–94 (DCPG) is G3. GTP contacts are provided by residues 91–95 (DCPGH) and 146–149 (NKMD). The tract at residues 146-149 (NKMD) is G4. Positions 185-187 (SAF) are G5.

Belongs to the TRAFAC class translation factor GTPase superfamily. Classic translation factor GTPase family. EF-Tu/EF-1A subfamily.

The protein localises to the cytoplasm. It catalyses the reaction GTP + H2O = GDP + phosphate + H(+). Its function is as follows. GTP hydrolase that promotes the GTP-dependent binding of aminoacyl-tRNA to the A-site of ribosomes during protein biosynthesis. In Methanosarcina acetivorans (strain ATCC 35395 / DSM 2834 / JCM 12185 / C2A), this protein is Elongation factor 1-alpha.